Reading from the N-terminus, the 247-residue chain is tRNA pseudouridine synthase A (247 aa).

D52 functions as the Nucleophile in the catalytic mechanism. Y113 is a binding site for substrate.

The protein belongs to the tRNA pseudouridine synthase TruA family. Homodimer.

It catalyses the reaction uridine(38/39/40) in tRNA = pseudouridine(38/39/40) in tRNA. In terms of biological role, formation of pseudouridine at positions 38, 39 and 40 in the anticodon stem and loop of transfer RNAs. The protein is tRNA pseudouridine synthase A of Sinorhizobium fredii (strain NBRC 101917 / NGR234).